Here is a 770-residue protein sequence, read N- to C-terminus: Transcription activator AMTR1 (770 aa).

Positions 7–34 (CLTCRQRKLKCDEKKPVCRQCAKASREC) form a DNA-binding region, zn(2)-C6 fungal-type.

It localises to the nucleus. Functionally, transcription factor that regulates the expression of the gene clusters that mediate the biosynthesis of AM-toxins, host-selective toxins (HSTs) causing Alternaria blotch on apple, a worldwide distributed disease. AM-toxins have two target sites for affecting susceptible apple cells; they cause invagination of the plasma membrane and electrolyte loss and chloroplast disorganization. The polypeptide is Transcription activator AMTR1 (Alternaria alternata (Alternaria rot fungus)).